The sequence spans 244 residues: Phosphoadenosine 5'-phosphosulfate reductase (244 aa).

Cysteine 239 (nucleophile; cysteine thiosulfonate intermediate) is an active-site residue.

This sequence belongs to the PAPS reductase family. CysH subfamily.

The protein localises to the cytoplasm. The enzyme catalyses [thioredoxin]-disulfide + sulfite + adenosine 3',5'-bisphosphate + 2 H(+) = [thioredoxin]-dithiol + 3'-phosphoadenylyl sulfate. Its pathway is sulfur metabolism; hydrogen sulfide biosynthesis; sulfite from sulfate: step 3/3. Catalyzes the formation of sulfite from phosphoadenosine 5'-phosphosulfate (PAPS) using thioredoxin as an electron donor. This Photorhabdus laumondii subsp. laumondii (strain DSM 15139 / CIP 105565 / TT01) (Photorhabdus luminescens subsp. laumondii) protein is Phosphoadenosine 5'-phosphosulfate reductase.